The primary structure comprises 472 residues: Aspartyl/glutamyl-tRNA(Asn/Gln) amidotransferase subunit B (472 aa).

It belongs to the GatB/GatE family. GatB subfamily. Heterotrimer of A, B and C subunits.

The enzyme catalyses L-glutamyl-tRNA(Gln) + L-glutamine + ATP + H2O = L-glutaminyl-tRNA(Gln) + L-glutamate + ADP + phosphate + H(+). It catalyses the reaction L-aspartyl-tRNA(Asn) + L-glutamine + ATP + H2O = L-asparaginyl-tRNA(Asn) + L-glutamate + ADP + phosphate + 2 H(+). Allows the formation of correctly charged Asn-tRNA(Asn) or Gln-tRNA(Gln) through the transamidation of misacylated Asp-tRNA(Asn) or Glu-tRNA(Gln) in organisms which lack either or both of asparaginyl-tRNA or glutaminyl-tRNA synthetases. The reaction takes place in the presence of glutamine and ATP through an activated phospho-Asp-tRNA(Asn) or phospho-Glu-tRNA(Gln). This Campylobacter jejuni subsp. jejuni serotype O:2 (strain ATCC 700819 / NCTC 11168) protein is Aspartyl/glutamyl-tRNA(Asn/Gln) amidotransferase subunit B.